A 60-amino-acid polypeptide reads, in one-letter code: DNA gyrase inhibitor YacG (60 aa).

Residues Cys-15, Cys-18, Cys-30, and Cys-34 each coordinate Zn(2+).

It belongs to the DNA gyrase inhibitor YacG family. Interacts with GyrB. Requires Zn(2+) as cofactor.

Functionally, inhibits all the catalytic activities of DNA gyrase by preventing its interaction with DNA. Acts by binding directly to the C-terminal domain of GyrB, which probably disrupts DNA binding by the gyrase. This chain is DNA gyrase inhibitor YacG, found in Bradyrhizobium diazoefficiens (strain JCM 10833 / BCRC 13528 / IAM 13628 / NBRC 14792 / USDA 110).